The sequence spans 199 residues: Putative 3-methyladenine DNA glycosylase (199 aa).

This sequence belongs to the DNA glycosylase MPG family.

The polypeptide is Putative 3-methyladenine DNA glycosylase (Chlorobium phaeobacteroides (strain BS1)).